Reading from the N-terminus, the 542-residue chain is Protein MGF 505-10R (542 aa).

It belongs to the asfivirus MGF 505 family.

Plays a role in virus cell tropism, and may be required for efficient virus replication in macrophages. This is Protein MGF 505-10R from Ornithodoros (relapsing fever ticks).